The chain runs to 323 residues: Beta-ketoacyl-[acyl-carrier-protein] synthase III (323 aa).

Catalysis depends on residues Cys113 and His250. The segment at 251–255 (QANRR) is ACP-binding. The active site involves Asn280.

This sequence belongs to the thiolase-like superfamily. FabH family. As to quaternary structure, homodimer.

The protein resides in the cytoplasm. The enzyme catalyses malonyl-[ACP] + acetyl-CoA + H(+) = 3-oxobutanoyl-[ACP] + CO2 + CoA. The protein operates within lipid metabolism; fatty acid biosynthesis. Its function is as follows. Catalyzes the condensation reaction of fatty acid synthesis by the addition to an acyl acceptor of two carbons from malonyl-ACP. Catalyzes the first condensation reaction which initiates fatty acid synthesis and may therefore play a role in governing the total rate of fatty acid production. Possesses both acetoacetyl-ACP synthase and acetyl transacylase activities. Its substrate specificity determines the biosynthesis of branched-chain and/or straight-chain of fatty acids. This Rhizobium johnstonii (strain DSM 114642 / LMG 32736 / 3841) (Rhizobium leguminosarum bv. viciae) protein is Beta-ketoacyl-[acyl-carrier-protein] synthase III.